The primary structure comprises 560 residues: Probable methionine--tRNA ligase, cytoplasmic (560 aa).

A 'HIGH' region motif is present at residues 16-26 (PYVNNQPHLGN). The short motif at 347–351 (KFSKS) is the 'KMSKS' region element. ATP is bound at residue K350.

The protein belongs to the class-I aminoacyl-tRNA synthetase family.

It localises to the cytoplasm. The enzyme catalyses tRNA(Met) + L-methionine + ATP = L-methionyl-tRNA(Met) + AMP + diphosphate. The protein is Probable methionine--tRNA ligase, cytoplasmic of Vairimorpha ceranae (strain BRL01) (Microsporidian parasite).